A 1690-amino-acid polypeptide reads, in one-letter code: DNA-directed RNA polymerase subunit beta' (1690 aa).

Cys-63, Cys-65, Cys-78, and Cys-81 together coordinate Zn(2+). Residues Asp-753, Asp-755, and Asp-757 each coordinate Mg(2+). Residues Cys-1107, Cys-1295, Cys-1302, and Cys-1305 each contribute to the Zn(2+) site.

The protein belongs to the RNA polymerase beta' chain family. In terms of assembly, the RNAP catalytic core consists of 2 alpha, 1 beta, 1 beta' and 1 omega subunit. When a sigma factor is associated with the core the holoenzyme is formed, which can initiate transcription. It depends on Mg(2+) as a cofactor. The cofactor is Zn(2+).

It carries out the reaction RNA(n) + a ribonucleoside 5'-triphosphate = RNA(n+1) + diphosphate. In terms of biological role, DNA-dependent RNA polymerase catalyzes the transcription of DNA into RNA using the four ribonucleoside triphosphates as substrates. This chain is DNA-directed RNA polymerase subunit beta', found in Thermotoga maritima (strain ATCC 43589 / DSM 3109 / JCM 10099 / NBRC 100826 / MSB8).